The following is a 333-amino-acid chain: Casein kinase II subunit beta-1 (333 aa).

A compositionally biased stretch (acidic residues) spans 58 to 78 (VEPEDDDDEEEEDEEDEEDMS). Disordered regions lie at residues 58–92 (VEPE…ERRH) and 282–333 (ARRY…ESEL). Positions 305 to 316 (ASRRRGPPRRQK) are enriched in basic residues.

This sequence belongs to the casein kinase 2 subunit beta family. Tetramer composed of two alpha chains, one beta chain and one beta' chain. Phosphorylated by alpha subunit.

Regulatory subunit of casein kinase II/CK2. As part of the kinase complex regulates the basal catalytic activity of the alpha subunit a constitutively active serine/threonine-protein kinase that phosphorylates a large number of substrates containing acidic residues C-terminal to the phosphorylated serine or threonine. In Neurospora crassa (strain ATCC 24698 / 74-OR23-1A / CBS 708.71 / DSM 1257 / FGSC 987), this protein is Casein kinase II subunit beta-1 (ckb-1).